The following is a 609-amino-acid chain: Protein NRT1/ PTR FAMILY 7.1 (609 aa).

2 consecutive transmembrane segments (helical) span residues 67 to 87 (IILLVNQGLATLAFFGVGVNL) and 109 to 129 (WTGTVYMFSLVGAFLSDSYWG). A Phosphothreonine modification is found at T133. 10 helical membrane passes run 136-156 (IFQVIFVIGVGLLSFVSWFFL), 173-193 (SSLGVAIFYLSVYLVAFGYGG), 216-236 (FFSYFYFALNVGALFSNTILV), 243-263 (LWTEGFLVSLGSAIVALVAFL), 367-387 (PIWLCTIIYSVIFTQMASLFV), 402-422 (IPAASMSVFDIFSVFVSTGIY), 438-458 (MGIGLIIGIMAMVAAGLTEIQ), 474-494 (ILWQIPQYVLVGASEVFMYVG), 516-536 (MASMALGNYVSSLMVNIVMAI), and 559-579 (FYFLIAALAAIDFVVYLIFAK).

Belongs to the major facilitator superfamily. Proton-dependent oligopeptide transporter (POT/PTR) (TC 2.A.17) family. As to expression, expressed in flowers.

The protein localises to the membrane. In Arabidopsis thaliana (Mouse-ear cress), this protein is Protein NRT1/ PTR FAMILY 7.1 (NPF7.1).